The sequence spans 167 residues: G/U mismatch-specific DNA glycosylase (167 aa).

It belongs to the uracil-DNA glycosylase (UDG) superfamily. TDG/mug family. As to quaternary structure, binds DNA as a monomer.

It localises to the cytoplasm. It catalyses the reaction Specifically hydrolyzes mismatched double-stranded DNA and polynucleotides, releasing free uracil.. Functionally, excises ethenocytosine and uracil, which can arise by alkylation or deamination of cytosine, respectively, from the corresponding mispairs with guanine in ds-DNA. It is capable of hydrolyzing the carbon-nitrogen bond between the sugar-phosphate backbone of the DNA and the mispaired base. The complementary strand guanine functions in substrate recognition. Required for DNA damage lesion repair in stationary-phase cells. The protein is G/U mismatch-specific DNA glycosylase of Pectobacterium carotovorum subsp. carotovorum (strain PC1).